The primary structure comprises 238 residues: C-type lectin domain family 4 member A (238 aa).

Over 1–48 the chain is Cytoplasmic; it reads MASEITYAEVKFKNESNSLHTYSESPAAPREKPIRDLRKPGSPSLLLT. Residues 5–10 carry the ITIM motif motif; that stretch reads ITYAEV. The chain crosses the membrane as a helical; Signal-anchor for type II membrane protein span at residues 49-69; the sequence is SLMLLLLLLAITFLVAFIIYF. Over 70–238 the chain is Extracellular; that stretch reads QKYSQLLEEK…SVCQMKKINL (169 aa). Residue Asn-91 is glycosylated (N-linked (GlcNAc...) asparagine). Cysteines 107 and 118 form a disulfide. The C-type lectin domain occupies 126–233; sequence SSASWNKSEE…SLKQKSVCQM (108 aa). N-linked (GlcNAc...) asparagine glycosylation is found at Asn-131 and Asn-136. Cystine bridges form between Cys-137/Cys-231 and Cys-205/Cys-223. Val-146, Glu-152, Glu-197, Ser-199, and Glu-203 together coordinate Ca(2+). Alpha-D-mannopyranose-binding positions include 197–199 and Glu-203; that span reads EPS. 209-211 provides a ligand contact to N-acetyl-D-glucosamine; the sequence is IYR. 2 residues coordinate Ca(2+): Asn-219 and Asp-220.

In terms of assembly, may interact with PTPN6 via its ITIM site. Expressed in splenic antigen-presenting cells including B-cells, monocytes/macrophages, and dendritic cells (at protein level). Expressed in spleen and lymph node and slightly increased with dendritic cell maturation.

The protein resides in the cell membrane. Its function is as follows. May be involved in regulating immune reactivity. May play a role in modulating dendritic cells (DC) differentiation and/or maturation. May be involved in the inhibition of B-cell-receptor-mediated calcium mobilization and protein tyrosine phosphorylation. C-type lectin receptor that binds carbohydrates mannose and fucose but also weakly interacts with N-acetylglucosamine (GlcNAc) in a Ca(2+)-dependent manner. Involved in regulating immune reactivity. Once triggered by antigen, it is internalized by clathrin-dependent endocytosis and delivers its antigenic cargo into the antigen presentation pathway resulting in cross-priming of CD8(+) T cells. This cross-presentation and cross-priming are enhanced by TLR7 and TLR8 agonists with increased expansion of the CD8(+) T cells, high production of IFNG and TNF with reduced levels of IL4, IL5 and IL13. In plasmacytoid dendritic cells, inhibits TLR9-mediated IFNA and TNF production. May be involved via its ITIM motif (immunoreceptor tyrosine-based inhibitory motifs) in the inhibition of B-cell-receptor-mediated calcium mobilization and protein tyrosine phosphorylation. The polypeptide is C-type lectin domain family 4 member A (Clec4a) (Mus musculus (Mouse)).